The following is a 560-amino-acid chain: Membrane protein insertase YidC (560 aa).

The next 6 helical transmembrane spans lie at 5–25, 334–354, 357–377, 431–451, 476–496, and 522–542; these read IINLIAAIILSLSIIFGWQYF, AIDFGWFYIITKPVFYAMNFF, YVGNFGVSILIVTVIIKLLMF, LPILVQIPVFFSIYKVLYVTI, LFGLLPFSPPSFLMIGAWPIL, and FMPLIFLFMFSSFPVGLLIYW.

This sequence belongs to the OXA1/ALB3/YidC family. Type 1 subfamily. Interacts with the Sec translocase complex via SecD. Specifically interacts with transmembrane segments of nascent integral membrane proteins during membrane integration.

It localises to the cell inner membrane. In terms of biological role, required for the insertion and/or proper folding and/or complex formation of integral membrane proteins into the membrane. Involved in integration of membrane proteins that insert both dependently and independently of the Sec translocase complex, as well as at least some lipoproteins. Aids folding of multispanning membrane proteins. The chain is Membrane protein insertase YidC from Rickettsia conorii (strain ATCC VR-613 / Malish 7).